Consider the following 434-residue polypeptide: Homoserine dehydrogenase (434 aa).

Positions 13 and 14 each coordinate NADPH. Positions 14, 33, and 43 each coordinate NAD(+). Val14 is an NADP(+) binding site. Arg45 provides a ligand contact to NADPH. Residues Arg45, Arg46, and Lys103 each contribute to the NADP(+) site. Lys103 contributes to the NADPH binding site. Na(+)-binding residues include Glu127, Val130, Gly132, and Ile134. NADP(+)-binding residues include Gly185 and Glu188. Positions 188 and 199 each coordinate L-homoserine. Lys203 acts as the Proton donor in catalysis. Gly300 serves as a coordination point for NADPH. An NAD(+)-binding site is contributed by Gly300. Position 300 (Gly300) interacts with NADP(+). One can recognise an ACT domain in the interval 353–429 (YLRIQAKDHP…GVSGPVVRIR (77 aa)).

The protein belongs to the homoserine dehydrogenase family. A metal cation is required as a cofactor.

It carries out the reaction L-homoserine + NADP(+) = L-aspartate 4-semialdehyde + NADPH + H(+). The catalysed reaction is L-homoserine + NAD(+) = L-aspartate 4-semialdehyde + NADH + H(+). Its pathway is amino-acid biosynthesis; L-methionine biosynthesis via de novo pathway; L-homoserine from L-aspartate: step 3/3. It participates in amino-acid biosynthesis; L-threonine biosynthesis; L-threonine from L-aspartate: step 3/5. With respect to regulation, feedback inhibition by threonine. In terms of biological role, catalyzes the conversion of L-aspartate-beta-semialdehyde (L-Asa) to L-homoserine (L-Hse), the third step in the biosynthesis of threonine and methionine from aspartate. This chain is Homoserine dehydrogenase (hom), found in Pseudomonas aeruginosa (strain ATCC 15692 / DSM 22644 / CIP 104116 / JCM 14847 / LMG 12228 / 1C / PRS 101 / PAO1).